Reading from the N-terminus, the 503-residue chain is Activin receptor type-1-like (503 aa).

Positions 1–21 (MTLGSPRKGLLMLLMALVTQG) are cleaved as a signal peptide. Residues 22-118 (DPVKPSRGPL…PSEQPGTDGQ (97 aa)) lie on the Extracellular side of the membrane. 3 disulfide bridges follow: cysteine 34–cysteine 51, cysteine 36–cysteine 41, and cysteine 46–cysteine 69. The mediates specificity for BMP ligand stretch occupies residues 73–76 (HREL). Disulfide bonds link cysteine 77/cysteine 89 and cysteine 90/cysteine 95. Residue asparagine 98 is glycosylated (N-linked (GlcNAc...) asparagine). A helical membrane pass occupies residues 119-141 (LALILGPVLALLALVALGVLGLW). Over 142–503 (HVRRRQEKQR…NSPEKPKVIQ (362 aa)) the chain is Cytoplasmic. Phosphoserine occurs at positions 155, 160, and 161. In terms of domain architecture, GS spans 172-201 (SMLGDLLDSDCTTGSGSGLPFLVQRTVARQ). Positions 202-492 (VALVECVGKG…LRIKKTLQKI (291 aa)) constitute a Protein kinase domain. ATP-binding positions include 208-216 (VGKGRYGEV) and lysine 229. Residue aspartate 330 is the Proton acceptor of the active site.

This sequence belongs to the protein kinase superfamily. TKL Ser/Thr protein kinase family. TGFB receptor subfamily. As to quaternary structure, interacts with TSC22D1/TSC-22. Mg(2+) serves as cofactor. It depends on Mn(2+) as a cofactor.

The protein resides in the cell membrane. It catalyses the reaction L-threonyl-[receptor-protein] + ATP = O-phospho-L-threonyl-[receptor-protein] + ADP + H(+). The catalysed reaction is L-seryl-[receptor-protein] + ATP = O-phospho-L-seryl-[receptor-protein] + ADP + H(+). In terms of biological role, type I receptor for TGF-beta family ligands BMP9/GDF2 and BMP10 and important regulator of normal blood vessel development. On ligand binding, forms a receptor complex consisting of two type II and two type I transmembrane serine/threonine kinases. Type II receptors phosphorylate and activate type I receptors which autophosphorylate, then bind and activate SMAD transcriptional regulators. May bind activin as well. The polypeptide is Activin receptor type-1-like (ACVRL1) (Homo sapiens (Human)).